Consider the following 101-residue polypeptide: Urease subunit beta (101 aa).

Belongs to the urease beta subunit family. Heterotrimer of UreA (gamma), UreB (beta) and UreC (alpha) subunits. Three heterotrimers associate to form the active enzyme.

Its subcellular location is the cytoplasm. The enzyme catalyses urea + 2 H2O + H(+) = hydrogencarbonate + 2 NH4(+). It participates in nitrogen metabolism; urea degradation; CO(2) and NH(3) from urea (urease route): step 1/1. The chain is Urease subunit beta from Rhizobium meliloti (strain 1021) (Ensifer meliloti).